A 663-amino-acid polypeptide reads, in one-letter code: UvrABC system protein B (663 aa).

The Helicase ATP-binding domain maps to 27-414 (KNIENGVKDQ…SDNHIAEQLI (388 aa)). ATP is bound at residue 40 to 47 (GVTGSGKT). Positions 93-116 (YYDYYQPEAYIKTTDTYIEKDSSV) match the Beta-hairpin motif. Residues 432–594 (QVDDLLDEIR…IDPKSIIKEI (163 aa)) enclose the Helicase C-terminal domain. The UVR domain occupies 624–659 (EKEITKLEKKIKKLVEELDFEQAIILRDEMLKLKEL).

This sequence belongs to the UvrB family. Forms a heterotetramer with UvrA during the search for lesions. Interacts with UvrC in an incision complex.

The protein resides in the cytoplasm. Its function is as follows. The UvrABC repair system catalyzes the recognition and processing of DNA lesions. A damage recognition complex composed of 2 UvrA and 2 UvrB subunits scans DNA for abnormalities. Upon binding of the UvrA(2)B(2) complex to a putative damaged site, the DNA wraps around one UvrB monomer. DNA wrap is dependent on ATP binding by UvrB and probably causes local melting of the DNA helix, facilitating insertion of UvrB beta-hairpin between the DNA strands. Then UvrB probes one DNA strand for the presence of a lesion. If a lesion is found the UvrA subunits dissociate and the UvrB-DNA preincision complex is formed. This complex is subsequently bound by UvrC and the second UvrB is released. If no lesion is found, the DNA wraps around the other UvrB subunit that will check the other stand for damage. This is UvrABC system protein B from Fusobacterium nucleatum subsp. nucleatum (strain ATCC 25586 / DSM 15643 / BCRC 10681 / CIP 101130 / JCM 8532 / KCTC 2640 / LMG 13131 / VPI 4355).